The chain runs to 256 residues: uncharacterized protein (256 aa).

Disordered regions lie at residues 1-171 (MARG…QLKH) and 185-256 (NGQR…LYND). A coiled-coil region spans residues 14 to 39 (KRRSKVQEEEEHVEGSEEEVEEPEQK). Composition is skewed to acidic residues over residues 21–35 (EEEE…EVEE) and 64–92 (SDDD…DNDE). The span at 108-129 (NRGDHESHDDNSDNEEQGDRGN) shows a compositional bias: basic and acidic residues. Positions 192 to 205 (KRGGPPRGSFGQRG) are enriched in gly residues. Residues 219–234 (RQGDTRDTRDTRDTRL) are compositionally biased toward basic and acidic residues.

This is an uncharacterized protein from Acanthamoeba polyphaga (Amoeba).